The following is a 387-amino-acid chain: Galactokinase (387 aa).

33–36 (EHTD) serves as a coordination point for substrate. Residues serine 67 and 124–130 (GAGLSSS) each bind ATP. 2 residues coordinate Mg(2+): serine 130 and glutamate 162. Aspartate 174 (proton acceptor) is an active-site residue. Position 224 (tyrosine 224) interacts with substrate.

This sequence belongs to the GHMP kinase family. GalK subfamily.

It localises to the cytoplasm. The enzyme catalyses alpha-D-galactose + ATP = alpha-D-galactose 1-phosphate + ADP + H(+). The protein operates within carbohydrate metabolism; galactose metabolism. Its function is as follows. Catalyzes the transfer of the gamma-phosphate of ATP to D-galactose to form alpha-D-galactose-1-phosphate (Gal-1-P). The sequence is that of Galactokinase from Lactiplantibacillus plantarum (strain ATCC BAA-793 / NCIMB 8826 / WCFS1) (Lactobacillus plantarum).